Here is a 386-residue protein sequence, read N- to C-terminus: 4-hydroxy-3-methylbut-2-en-1-yl diphosphate synthase (flavodoxin) (386 aa).

[4Fe-4S] cluster is bound by residues C281, C284, C316, and E323.

The protein belongs to the IspG family. [4Fe-4S] cluster is required as a cofactor.

It carries out the reaction (2E)-4-hydroxy-3-methylbut-2-enyl diphosphate + oxidized [flavodoxin] + H2O + 2 H(+) = 2-C-methyl-D-erythritol 2,4-cyclic diphosphate + reduced [flavodoxin]. It functions in the pathway isoprenoid biosynthesis; isopentenyl diphosphate biosynthesis via DXP pathway; isopentenyl diphosphate from 1-deoxy-D-xylulose 5-phosphate: step 5/6. Its function is as follows. Converts 2C-methyl-D-erythritol 2,4-cyclodiphosphate (ME-2,4cPP) into 1-hydroxy-2-methyl-2-(E)-butenyl 4-diphosphate. This chain is 4-hydroxy-3-methylbut-2-en-1-yl diphosphate synthase (flavodoxin), found in Corynebacterium jeikeium (strain K411).